A 244-amino-acid polypeptide reads, in one-letter code: Phosphoadenosine 5'-phosphosulfate reductase (244 aa).

Cysteine 239 functions as the Nucleophile; cysteine thiosulfonate intermediate in the catalytic mechanism.

The protein belongs to the PAPS reductase family. CysH subfamily.

The protein localises to the cytoplasm. It catalyses the reaction [thioredoxin]-disulfide + sulfite + adenosine 3',5'-bisphosphate + 2 H(+) = [thioredoxin]-dithiol + 3'-phosphoadenylyl sulfate. Its pathway is sulfur metabolism; hydrogen sulfide biosynthesis; sulfite from sulfate: step 3/3. Functionally, catalyzes the formation of sulfite from phosphoadenosine 5'-phosphosulfate (PAPS) using thioredoxin as an electron donor. The protein is Phosphoadenosine 5'-phosphosulfate reductase of Salmonella newport (strain SL254).